Here is a 332-residue protein sequence, read N- to C-terminus: tRNA-dihydrouridine(20/20a) synthase (332 aa).

Residues 19–21 and Gln-71 each bind FMN; that span reads PML. Cys-101 serves as the catalytic Proton donor. Residues Lys-140, His-173, 213–215, and 235–236 each bind FMN; these read NGG and GR.

It belongs to the Dus family. DusA subfamily. FMN is required as a cofactor.

It catalyses the reaction 5,6-dihydrouridine(20) in tRNA + NADP(+) = uridine(20) in tRNA + NADPH + H(+). The enzyme catalyses 5,6-dihydrouridine(20) in tRNA + NAD(+) = uridine(20) in tRNA + NADH + H(+). The catalysed reaction is 5,6-dihydrouridine(20a) in tRNA + NADP(+) = uridine(20a) in tRNA + NADPH + H(+). It carries out the reaction 5,6-dihydrouridine(20a) in tRNA + NAD(+) = uridine(20a) in tRNA + NADH + H(+). Functionally, catalyzes the synthesis of 5,6-dihydrouridine (D), a modified base found in the D-loop of most tRNAs, via the reduction of the C5-C6 double bond in target uridines. Specifically modifies U20 and U20a in tRNAs. In Salmonella typhimurium (strain LT2 / SGSC1412 / ATCC 700720), this protein is tRNA-dihydrouridine(20/20a) synthase.